Consider the following 861-residue polypeptide: FO synthase (861 aa).

2 consecutive Radical SAM core domains span residues 69–319 and 528–763; these read ITYS…LQAP and VTYI…LLHP. The segment at 70–401 is cofG-like; the sequence is TYSKSVFIPL…PRLLPHVRAL (332 aa). [4Fe-4S] cluster is bound by residues C83, C87, C90, C542, C546, and C549. Positions 505 to 838 are cofH-like; the sequence is DGPALDALTR…KPRTTLYGEV (334 aa).

In the N-terminal section; belongs to the radical SAM superfamily. CofG family. It in the C-terminal section; belongs to the radical SAM superfamily. CofH family. It depends on [4Fe-4S] cluster as a cofactor.

It catalyses the reaction 5-amino-6-(D-ribitylamino)uracil + L-tyrosine + S-adenosyl-L-methionine = 5-amino-5-(4-hydroxybenzyl)-6-(D-ribitylimino)-5,6-dihydrouracil + 2-iminoacetate + 5'-deoxyadenosine + L-methionine + H(+). It carries out the reaction 5-amino-5-(4-hydroxybenzyl)-6-(D-ribitylimino)-5,6-dihydrouracil + S-adenosyl-L-methionine = 7,8-didemethyl-8-hydroxy-5-deazariboflavin + 5'-deoxyadenosine + L-methionine + NH4(+) + H(+). It functions in the pathway cofactor biosynthesis; coenzyme F0 biosynthesis. Functionally, catalyzes the radical-mediated synthesis of 7,8-didemethyl-8-hydroxy-5-deazariboflavin (FO) from 5-amino-6-(D-ribitylamino)uracil and L-tyrosine. In Streptomyces avermitilis (strain ATCC 31267 / DSM 46492 / JCM 5070 / NBRC 14893 / NCIMB 12804 / NRRL 8165 / MA-4680), this protein is FO synthase (fbiC).